The primary structure comprises 743 residues: Cytosolic endo-beta-N-acetylglucosaminidase (743 aa).

M1 is modified (N-acetylmethionine). The span at 1–11 (MEAAAVTVTRS) shows a compositional bias: low complexity. Residues 1-55 (MEAAAVTVTRSATRRRRRQLQGLAAPEAGTQEEQEDQEPRPRRRRPGRSIKDEEE) form a disordered region. Phosphoserine is present on S66. One can recognise a BRCT domain in the interval 291–383 (RVFFDSCDGF…DFFQNQDKFW (93 aa)).

Belongs to the glycosyl hydrolase 85 family. In terms of tissue distribution, widely expressed. Expressed at higher level in thymus and spleen.

It is found in the cytoplasm. The protein localises to the cytosol. The catalysed reaction is an N(4)-(oligosaccharide-(1-&gt;3)-[oligosaccharide-(1-&gt;6)]-beta-D-Man-(1-&gt;4)-beta-D-GlcNAc-(1-&gt;4)-alpha-D-GlcNAc)-L-asparaginyl-[protein] + H2O = an oligosaccharide-(1-&gt;3)-[oligosaccharide-(1-&gt;6)]-beta-D-Man-(1-&gt;4)-D-GlcNAc + N(4)-(N-acetyl-beta-D-glucosaminyl)-L-asparaginyl-[protein]. Endoglycosidase that releases N-glycans from glycoproteins by cleaving the beta-1,4-glycosidic bond in the N,N'-diacetylchitobiose core. Involved in the processing of free oligosaccharides in the cytosol. In Homo sapiens (Human), this protein is Cytosolic endo-beta-N-acetylglucosaminidase (ENGASE).